A 338-amino-acid chain; its full sequence is Lipoate-protein ligase A (338 aa).

In terms of domain architecture, BPL/LPL catalytic spans proline 29 to valine 216. Residues arginine 71, glycine 76–phenylalanine 79, and lysine 134 each bind ATP. Lysine 134 is a binding site for (R)-lipoate.

Belongs to the LplA family. As to quaternary structure, monomer.

The protein localises to the cytoplasm. It carries out the reaction L-lysyl-[lipoyl-carrier protein] + (R)-lipoate + ATP = N(6)-[(R)-lipoyl]-L-lysyl-[lipoyl-carrier protein] + AMP + diphosphate + H(+). The protein operates within protein modification; protein lipoylation via exogenous pathway; protein N(6)-(lipoyl)lysine from lipoate: step 1/2. It participates in protein modification; protein lipoylation via exogenous pathway; protein N(6)-(lipoyl)lysine from lipoate: step 2/2. Functionally, catalyzes both the ATP-dependent activation of exogenously supplied lipoate to lipoyl-AMP and the transfer of the activated lipoyl onto the lipoyl domains of lipoate-dependent enzymes. This chain is Lipoate-protein ligase A, found in Salmonella paratyphi C (strain RKS4594).